Consider the following 129-residue polypeptide: MFAVIKTGGRQYRVAPDDVLEVGKIEGEVGSIVQLNEVLVVGGDTPILGLPTVAGASVAVEVLDHKRGPKVIAFKKRRRKNSRRKRGYRDEITVLRVSEILTDNAKPTKGPRPKKEKVAKEATKEDAAA.

The disordered stretch occupies residues 102–129 (TDNAKPTKGPRPKKEKVAKEATKEDAAA). The segment covering 116–129 (EKVAKEATKEDAAA) has biased composition (basic and acidic residues).

It belongs to the bacterial ribosomal protein bL21 family. In terms of assembly, part of the 50S ribosomal subunit. Contacts protein L20.

This protein binds to 23S rRNA in the presence of protein L20. The polypeptide is Large ribosomal subunit protein bL21 (Bradyrhizobium diazoefficiens (strain JCM 10833 / BCRC 13528 / IAM 13628 / NBRC 14792 / USDA 110)).